A 252-amino-acid polypeptide reads, in one-letter code: Phosphate import ATP-binding protein PstB (252 aa).

An ABC transporter domain is found at 6–247 (IDTRDVNFWY…PEKEATQNYI (242 aa)). 38 to 45 (GPSGCGKS) is a binding site for ATP.

It belongs to the ABC transporter superfamily. Phosphate importer (TC 3.A.1.7) family. The complex is composed of two ATP-binding proteins (PstB), two transmembrane proteins (PstC and PstA) and a solute-binding protein (PstS).

The protein resides in the cell inner membrane. It carries out the reaction phosphate(out) + ATP + H2O = ADP + 2 phosphate(in) + H(+). Its function is as follows. Part of the ABC transporter complex PstSACB involved in phosphate import. Responsible for energy coupling to the transport system. The sequence is that of Phosphate import ATP-binding protein PstB from Bacteroides thetaiotaomicron (strain ATCC 29148 / DSM 2079 / JCM 5827 / CCUG 10774 / NCTC 10582 / VPI-5482 / E50).